A 242-amino-acid chain; its full sequence is Uridylate kinase (242 aa).

11-14 is an ATP binding site; it reads KLSG. Positions 19 to 24 are involved in allosteric activation by GTP; that stretch reads GDKGVG. Glycine 53 contacts UMP. ATP-binding residues include glycine 54 and arginine 58. UMP contacts are provided by residues aspartate 73 and 134–141; that span reads IGSPYFST. ATP contacts are provided by asparagine 162, tyrosine 168, and aspartate 171.

It belongs to the UMP kinase family. As to quaternary structure, homohexamer.

It localises to the cytoplasm. The enzyme catalyses UMP + ATP = UDP + ADP. It functions in the pathway pyrimidine metabolism; CTP biosynthesis via de novo pathway; UDP from UMP (UMPK route): step 1/1. Allosterically activated by GTP. Inhibited by UTP. Functionally, catalyzes the reversible phosphorylation of UMP to UDP. In Streptococcus agalactiae serotype Ia (strain ATCC 27591 / A909 / CDC SS700), this protein is Uridylate kinase.